A 254-amino-acid polypeptide reads, in one-letter code: MVKVILNGCSGKMGSVVSNLAETKFPNVEIVAGIDNNTMAQRSYPIFAKPEDCNVSYDVLLDFSRADALKSLVEFSKKTKKPLILCSTGYTAEDLKFIEESSKEIPLFRSANMSIGINLVNNLLKKVAPVLYENFDIELVERHHNQKVDAPSGTALLLAHTIQDSLNEETKLLYGREGIAKREKNEICVNTVRGGGIIGDHEVIFAGDGEVIEINHKAISRDVFAIGALKACEYMADKTKAGKYSMDDVLQLNF.

NAD(+) contacts are provided by residues 8-13, D35, 86-88, and 110-113; these read GCSGKM, CST, and SANM. The Proton donor/acceptor role is filled by H143. H144 lines the (S)-2,3,4,5-tetrahydrodipicolinate pocket. Residue K147 is the Proton donor of the active site. 153–154 is a binding site for (S)-2,3,4,5-tetrahydrodipicolinate; sequence GT.

This sequence belongs to the DapB family.

Its subcellular location is the cytoplasm. It catalyses the reaction (S)-2,3,4,5-tetrahydrodipicolinate + NAD(+) + H2O = (2S,4S)-4-hydroxy-2,3,4,5-tetrahydrodipicolinate + NADH + H(+). The catalysed reaction is (S)-2,3,4,5-tetrahydrodipicolinate + NADP(+) + H2O = (2S,4S)-4-hydroxy-2,3,4,5-tetrahydrodipicolinate + NADPH + H(+). The protein operates within amino-acid biosynthesis; L-lysine biosynthesis via DAP pathway; (S)-tetrahydrodipicolinate from L-aspartate: step 4/4. Functionally, catalyzes the conversion of 4-hydroxy-tetrahydrodipicolinate (HTPA) to tetrahydrodipicolinate. The chain is 4-hydroxy-tetrahydrodipicolinate reductase from Clostridium perfringens (strain SM101 / Type A).